Reading from the N-terminus, the 294-residue chain is 4-hydroxy-tetrahydrodipicolinate synthase (294 aa).

Thr45 lines the pyruvate pocket. Tyr133 acts as the Proton donor/acceptor in catalysis. Lys161 serves as the catalytic Schiff-base intermediate with substrate. Position 203 (Ile203) interacts with pyruvate.

The protein belongs to the DapA family. Homotetramer; dimer of dimers.

The protein resides in the cytoplasm. It catalyses the reaction L-aspartate 4-semialdehyde + pyruvate = (2S,4S)-4-hydroxy-2,3,4,5-tetrahydrodipicolinate + H2O + H(+). It participates in amino-acid biosynthesis; L-lysine biosynthesis via DAP pathway; (S)-tetrahydrodipicolinate from L-aspartate: step 3/4. Catalyzes the condensation of (S)-aspartate-beta-semialdehyde [(S)-ASA] and pyruvate to 4-hydroxy-tetrahydrodipicolinate (HTPA). The sequence is that of 4-hydroxy-tetrahydrodipicolinate synthase from Alcanivorax borkumensis (strain ATCC 700651 / DSM 11573 / NCIMB 13689 / SK2).